The following is a 301-amino-acid chain: Probable alpha-L-glutamate ligase 2 (301 aa).

The 184-residue stretch at 104 to 287 folds into the ATP-grasp domain; it reads LQLLSRKSIG…VADKIIQFIE (184 aa). ATP contacts are provided by residues Lys-141, 178–179, Asp-187, and 211–213; these read EY and RSN. Residues Asp-248, Glu-260, and Asn-262 each contribute to the Mg(2+) site. Asp-248, Glu-260, and Asn-262 together coordinate Mn(2+).

The protein belongs to the RimK family. Mg(2+) is required as a cofactor. The cofactor is Mn(2+).

The chain is Probable alpha-L-glutamate ligase 2 from Shewanella denitrificans (strain OS217 / ATCC BAA-1090 / DSM 15013).